A 296-amino-acid chain; its full sequence is Glycine--tRNA ligase alpha subunit (296 aa).

Belongs to the class-II aminoacyl-tRNA synthetase family. Tetramer of two alpha and two beta subunits.

It localises to the cytoplasm. The catalysed reaction is tRNA(Gly) + glycine + ATP = glycyl-tRNA(Gly) + AMP + diphosphate. In Francisella tularensis subsp. holarctica (strain FTNF002-00 / FTA), this protein is Glycine--tRNA ligase alpha subunit.